Reading from the N-terminus, the 142-residue chain is Neuritin (142 aa).

The first 27 residues, 1–27 (MGLTLSGRYISLFLAVQIAYLLQAVRA), serve as a signal peptide directing secretion. A112 is lipidated: GPI-anchor amidated alanine. Residues 113 to 142 (GGNGAIRSSVPFGVTLLITALSALVTWMQF) constitute a propeptide, removed in mature form.

Belongs to the neuritin family.

Its subcellular location is the cell membrane. It is found in the synapse. In terms of biological role, modulates postsynaptic dendritic arbor elaboration and synaptic maturation. The chain is Neuritin (nrn1) from Danio rerio (Zebrafish).